Here is a 133-residue protein sequence, read N- to C-terminus: Large ribosomal subunit protein eL32z (133 aa).

Belongs to the eukaryotic ribosomal protein eL32 family.

This chain is Large ribosomal subunit protein eL32z (RPL32A), found in Arabidopsis thaliana (Mouse-ear cress).